The chain runs to 492 residues: MDPYKFRPSSSFDSPFWTTNSGAPVWNNNSSLTVGARGPILLEDYHLVEKLANFDRERIPERVVHARGASAKGFFEVTHDISQLTCADFLRAPGVQTPLIVRFSTVIHERGSPETLRDPRGFAVKFYTREGNFDLVGNNFPVFFIRDGMKFPDMVHALKPNPKSHIQENWRILDFFSHHPESLHMFTFLFDDIGVPQDYRHMDGSGVHTYTLINKAGKSHYVKFHWKPTCGVKSLLEDEAIRVGGANHSHATQDLYDSIAAGNYPEWKLFIQIMDPLHEDRFDFDPLDVTKTWPEDIFPLQPMGRMVLNKNIDNFFAENEQLAFCPSLIVPGIYYSDDKLLQTRIFSYSDTQRHRLGPNYLQLPANAPKCAHHNNHHEGFMNFMHRDEEVNYFPSRYDPVRHAEKHPIPSTVLSGKREKCIIGKENNFKQPGERYRSFSADRQERFINRWIDALSDPRVTHEIRSIWISYWSQADKSLGQKIASRLNVRPSI.

Residues H65 and N138 contribute to the active site. A heme-binding site is contributed by Y348.

This sequence belongs to the catalase family. In terms of assembly, homotetramer. Heme serves as cofactor.

The protein resides in the peroxisome. The enzyme catalyses 2 H2O2 = O2 + 2 H2O. Its function is as follows. Occurs in almost all aerobically respiring organisms and serves to protect cells from the toxic effects of hydrogen peroxide. The protein is Catalase isozyme 2 (CAT2) of Gossypium hirsutum (Upland cotton).